The following is a 315-amino-acid chain: MYTQDRFMSPQYKARFKGYVQVTKPGIIFGNLISVAGGFLLAAKGDVNLALMLASLVGLSLVVASGCAVNNCIDRDIDAKMQRTCKRVTVTGEIAVGNVLAFGLALGVLGFSILALFTNALALLFAVIGYIVYVGVYSLYMKRNSVYGTLVGSFSGAVPPVVGYCSVTGQMDMGAAILLLMFSLWQMPHSYAIAIFRFNDYAAANIPVLPVAEGMTKAKLHIVLYIAVFALVSALLPLAGYTGIAFMAVTCATSLWWLAMALKGYRHGVDIQRWARQVFGFSIITIMALSITMALDSQVIKEQVIGQTNLFTLVK.

Transmembrane regions (helical) follow at residues 25-45, 49-69, 87-107, 120-139, 145-165, 176-196, 220-240, 242-262, and 280-300; these read PGII…AAKG, LALM…GCAV, RVTV…LALG, ALAL…VYSL, SVYG…VGYC, AILL…IAIF, LHIV…PLAG, TGIA…AMAL, and GFSI…SQVI.

The protein belongs to the UbiA prenyltransferase family. Protoheme IX farnesyltransferase subfamily.

The protein localises to the cell inner membrane. The catalysed reaction is heme b + (2E,6E)-farnesyl diphosphate + H2O = Fe(II)-heme o + diphosphate. The protein operates within porphyrin-containing compound metabolism; heme O biosynthesis; heme O from protoheme: step 1/1. In terms of biological role, converts heme B (protoheme IX) to heme O by substitution of the vinyl group on carbon 2 of heme B porphyrin ring with a hydroxyethyl farnesyl side group. This Shewanella sp. (strain W3-18-1) protein is Protoheme IX farnesyltransferase 1.